The sequence spans 330 residues: D-lactate dehydrogenase (330 aa).

Residues arginine 155–isoleucine 156, aspartate 175, methionine 206–proline 207, asparagine 212, methionine 233–arginine 235, and aspartate 259 contribute to the NAD(+) site. Arginine 235 is an active-site residue. Residue glutamate 264 is part of the active site. Histidine 296 (proton donor) is an active-site residue.

This sequence belongs to the D-isomer specific 2-hydroxyacid dehydrogenase family.

The enzyme catalyses (R)-lactate + NAD(+) = pyruvate + NADH + H(+). This is D-lactate dehydrogenase (ldhD) from Streptococcus agalactiae serotype III (strain NEM316).